A 360-amino-acid polypeptide reads, in one-letter code: Mannonate dehydratase (360 aa).

This sequence belongs to the mannonate dehydratase family. The cofactor is Fe(2+). Requires Mn(2+) as cofactor.

The enzyme catalyses D-mannonate = 2-dehydro-3-deoxy-D-gluconate + H2O. The protein operates within carbohydrate metabolism; pentose and glucuronate interconversion. Functionally, catalyzes the dehydration of D-mannonate. This is Mannonate dehydratase (uxuA) from Thermotoga neapolitana.